Consider the following 104-residue polypeptide: Flagellar hook-basal body complex protein FliE (104 aa).

It belongs to the FliE family.

It localises to the bacterial flagellum basal body. In Serratia proteamaculans (strain 568), this protein is Flagellar hook-basal body complex protein FliE.